The chain runs to 399 residues: Succinate--CoA ligase [ADP-forming] subunit beta (399 aa).

The ATP-grasp domain occupies 9–254 (KAVLAEFGAP…ESEEDPKEIE (246 aa)). Residues Lys46, 53 to 55 (GRG), Glu109, Ala112, and Glu117 contribute to the ATP site. Mg(2+) is bound by residues Asn209 and Asp223. Substrate contacts are provided by residues Asn274 and 331–333 (GIM).

Belongs to the succinate/malate CoA ligase beta subunit family. In terms of assembly, heterotetramer of two alpha and two beta subunits. It depends on Mg(2+) as a cofactor.

It carries out the reaction succinate + ATP + CoA = succinyl-CoA + ADP + phosphate. The catalysed reaction is GTP + succinate + CoA = succinyl-CoA + GDP + phosphate. The protein operates within carbohydrate metabolism; tricarboxylic acid cycle; succinate from succinyl-CoA (ligase route): step 1/1. In terms of biological role, succinyl-CoA synthetase functions in the citric acid cycle (TCA), coupling the hydrolysis of succinyl-CoA to the synthesis of either ATP or GTP and thus represents the only step of substrate-level phosphorylation in the TCA. The beta subunit provides nucleotide specificity of the enzyme and binds the substrate succinate, while the binding sites for coenzyme A and phosphate are found in the alpha subunit. The chain is Succinate--CoA ligase [ADP-forming] subunit beta from Caulobacter vibrioides (strain NA1000 / CB15N) (Caulobacter crescentus).